The following is an 84-amino-acid chain: MPLARDLLHPSLEEEKKKHKKKRLVQSPNSYFMDVKCPGCYKITTVFSHAQTVVLCVGCSTVLCQPTGGKARLTEGCSFRRKQH.

Basic and acidic residues predominate over residues 1–16 (MPLARDLLHPSLEEEK). Residues 1–23 (MPLARDLLHPSLEEEKKKHKKKR) form a disordered region. The C4-type zinc-finger motif lies at 38-60 (PGCYKITTVFSHAQTVVLCVGCS).

Belongs to the eukaryotic ribosomal protein eS27 family. The cofactor is Zn(2+).

The chain is Small ribosomal subunit protein eS27-like from Mus musculus (Mouse).